The chain runs to 187 residues: Pyridoxal 5'-phosphate synthase subunit PdxT (187 aa).

Gly-47–Ser-49 serves as a coordination point for L-glutamine. The active-site Nucleophile is the Cys-76. Residues Arg-102 and Ile-128–Arg-129 contribute to the L-glutamine site. Active-site charge relay system residues include His-165 and Glu-167.

The protein belongs to the glutaminase PdxT/SNO family. In terms of assembly, in the presence of PdxS, forms a dodecamer of heterodimers. Only shows activity in the heterodimer.

It catalyses the reaction aldehydo-D-ribose 5-phosphate + D-glyceraldehyde 3-phosphate + L-glutamine = pyridoxal 5'-phosphate + L-glutamate + phosphate + 3 H2O + H(+). The enzyme catalyses L-glutamine + H2O = L-glutamate + NH4(+). It participates in cofactor biosynthesis; pyridoxal 5'-phosphate biosynthesis. Functionally, catalyzes the hydrolysis of glutamine to glutamate and ammonia as part of the biosynthesis of pyridoxal 5'-phosphate. The resulting ammonia molecule is channeled to the active site of PdxS. This chain is Pyridoxal 5'-phosphate synthase subunit PdxT, found in Methanococcus maripaludis (strain C5 / ATCC BAA-1333).